The primary structure comprises 95 residues: Citrate lyase acyl carrier protein (95 aa).

The residue at position 14 (S14) is an O-(phosphoribosyl dephospho-coenzyme A)serine.

It belongs to the CitD family. As to quaternary structure, oligomer with a subunit composition of (alpha,beta,gamma)6.

It localises to the cytoplasm. In terms of biological role, covalent carrier of the coenzyme of citrate lyase. In Haemophilus influenzae (strain ATCC 51907 / DSM 11121 / KW20 / Rd), this protein is Citrate lyase acyl carrier protein.